The sequence spans 551 residues: Chaperonin GroEL (551 aa).

Residues 30 to 33, K51, 87 to 91, G415, 481 to 483, and D497 contribute to the ATP site; these read TLGP, DGTTT, and NAA.

Belongs to the chaperonin (HSP60) family. As to quaternary structure, forms a cylinder of 14 subunits composed of two heptameric rings stacked back-to-back. Interacts with the co-chaperonin GroES.

Its subcellular location is the cytoplasm. The catalysed reaction is ATP + H2O + a folded polypeptide = ADP + phosphate + an unfolded polypeptide.. Together with its co-chaperonin GroES, plays an essential role in assisting protein folding. The GroEL-GroES system forms a nano-cage that allows encapsulation of the non-native substrate proteins and provides a physical environment optimized to promote and accelerate protein folding. This Magnetococcus marinus (strain ATCC BAA-1437 / JCM 17883 / MC-1) protein is Chaperonin GroEL.